The chain runs to 63 residues: Adipokinetic prohormone type 1 (63 aa).

The first 22 residues, 1 to 22 (MVQRCLVVALLVVVVAAALCSA), serve as a signal peptide directing secretion. At Gln23 the chain carries Pyrrolidone carboxylic acid. Thr32 is subject to Threonine amide.

This sequence belongs to the AKH/HRTH/RPCH family. Adipokinetic hormone precursor-related peptide (APRP) can form three type of disulfide-bond dimers: p1 (alpha-alpha), p2 (alpha-beta), and p3 (beta-beta).

The protein localises to the secreted. Functionally, this hormone, released from cells in the corpora cardiaca, causes release of diglycerides from the fat body and stimulation of muscles to use these diglycerides as an energy source during energy-demanding processes. The protein is Adipokinetic prohormone type 1 of Schistocerca gregaria (Desert locust).